We begin with the raw amino-acid sequence, 607 residues long: UPF0329 protein ECU06_1610 (607 aa).

Disordered stretches follow at residues 312-410 (VHEV…RSKG) and 531-570 (TSSE…PPGV). Over residues 313–347 (HEVKERESEEKRREEESLRNAEELLRMEEREKGEG) the composition is skewed to basic and acidic residues. Residues 353 to 364 (KGKKKRGKKGAG) show a composition bias toward basic residues. A compositionally biased stretch (basic and acidic residues) spans 365-374 (KAKEESKEED). Residues 375-393 (RGEEEEESVEAEVPVEEMA) are compositionally biased toward acidic residues. The segment covering 531-543 (TSSEKTGKGSSPS) has biased composition (polar residues). Acidic residues predominate over residues 549 to 558 (DVDEIEEDGS).

Belongs to the UPF0329 family.

The chain is UPF0329 protein ECU06_1610 from Encephalitozoon cuniculi (strain GB-M1) (Microsporidian parasite).